The chain runs to 167 residues: Urease accessory protein UreE (167 aa).

The protein belongs to the UreE family.

The protein localises to the cytoplasm. Functionally, involved in urease metallocenter assembly. Binds nickel. Probably functions as a nickel donor during metallocenter assembly. This Pseudomonas aeruginosa (strain UCBPP-PA14) protein is Urease accessory protein UreE.